Consider the following 381-residue polypeptide: Choline transport ATP-binding protein OpuBA (381 aa).

The 235-residue stretch at 2 to 236 (LTLENVSKTY…PADEFVEEFI (235 aa)) folds into the ABC transporter domain. Position 35–42 (35–42 (GPSGCGKT)) interacts with ATP. CBS domains are found at residues 256-314 (MNTQ…LVSE) and 316-374 (LHED…WGEE).

It belongs to the ABC transporter superfamily.

Functionally, involved in a high affinity multicomponent binding-protein-dependent transport system for choline. Probably responsible for energy coupling to the transport system. The polypeptide is Choline transport ATP-binding protein OpuBA (opuBA) (Bacillus subtilis (strain 168)).